A 632-amino-acid polypeptide reads, in one-letter code: Protein EAP1 (632 aa).

Disordered stretches follow at residues 1–80 (MELN…KKNK), 149–204 (MGPP…DDEE), and 248–313 (KSKG…PSLS). Polar residues-rich tracts occupy residues 7 to 38 (SIISSSQFSGELSDSDTAAATHKSQQAISNLF) and 54 to 69 (VESSTDSSNISVATSG). Serine 30 is subject to Phosphoserine. Phosphoserine is present on residues serine 281 and serine 282. Over residues 288–298 (NLKRQDKKEES) the composition is skewed to basic and acidic residues. A phosphoserine mark is found at serine 327 and serine 344. The segment at 347–378 (SLPSLDNNNQVPSSNVSVVNNDGNSTPHQSGS) is disordered. The span at 353-371 (NNNQVPSSNVSVVNNDGNS) shows a compositional bias: low complexity. A Phosphoserine modification is found at serine 387. Disordered regions lie at residues 429 to 541 (QHPP…PPPP) and 587 to 632 (QGNF…KNIK). Residue 440 to 447 (GLLNKGKS) coordinates ATP. Pro residues predominate over residues 474 to 486 (PNFPQRMMPPPPG). The segment covering 492-505 (KDSKDVNKKEDRQL) has biased composition (basic and acidic residues). Polar residues-rich tracts occupy residues 507-516 (QNKNPNGTRN), 590-603 (FPPNFQQGFGSNSP), and 610-621 (INANGKNVTNQL).

Interacts with SMY2, SYH1 and eIF4E.

The protein localises to the cytoplasm. Can regulate translation through binding to eIF4E. Competes with eIF4G and p20 for binding to eIF4E in vivo and inhibits cap-dependent translation in vitro. Plays a role in cell growth and is implicated in the TOR signaling cascade. Functions independently of eIF4E to maintain genetic stability and to attenuate GCN4 translation upon TOR inactivation. The protein is Protein EAP1 (EAP1) of Saccharomyces cerevisiae (strain ATCC 204508 / S288c) (Baker's yeast).